A 422-amino-acid chain; its full sequence is Serine--tRNA ligase (422 aa).

Position 229–231 (229–231) interacts with L-serine; the sequence is TAE. ATP is bound at residue 260-262; sequence RKE. Glu283 provides a ligand contact to L-serine. An ATP-binding site is contributed by 347–350; it reads EISS. An L-serine-binding site is contributed by Ser383.

This sequence belongs to the class-II aminoacyl-tRNA synthetase family. Type-1 seryl-tRNA synthetase subfamily. Homodimer. The tRNA molecule binds across the dimer.

Its subcellular location is the cytoplasm. The enzyme catalyses tRNA(Ser) + L-serine + ATP = L-seryl-tRNA(Ser) + AMP + diphosphate + H(+). It catalyses the reaction tRNA(Sec) + L-serine + ATP = L-seryl-tRNA(Sec) + AMP + diphosphate + H(+). It participates in aminoacyl-tRNA biosynthesis; selenocysteinyl-tRNA(Sec) biosynthesis; L-seryl-tRNA(Sec) from L-serine and tRNA(Sec): step 1/1. Functionally, catalyzes the attachment of serine to tRNA(Ser). Is also able to aminoacylate tRNA(Sec) with serine, to form the misacylated tRNA L-seryl-tRNA(Sec), which will be further converted into selenocysteinyl-tRNA(Sec). The protein is Serine--tRNA ligase of Geobacter sp. (strain M21).